The primary structure comprises 428 residues: 3-phosphoshikimate 1-carboxyvinyltransferase (428 aa).

3 residues coordinate 3-phosphoshikimate: K21, S22, and R26. Phosphoenolpyruvate is bound at residue K21. Phosphoenolpyruvate is bound by residues G92 and R120. 4 residues coordinate 3-phosphoshikimate: S165, Q167, D313, and K340. Q167 serves as a coordination point for phosphoenolpyruvate. Residue D313 is the Proton acceptor of the active site. R344 and R386 together coordinate phosphoenolpyruvate.

Belongs to the EPSP synthase family. In terms of assembly, monomer.

It localises to the cytoplasm. It catalyses the reaction 3-phosphoshikimate + phosphoenolpyruvate = 5-O-(1-carboxyvinyl)-3-phosphoshikimate + phosphate. It participates in metabolic intermediate biosynthesis; chorismate biosynthesis; chorismate from D-erythrose 4-phosphate and phosphoenolpyruvate: step 6/7. In terms of biological role, catalyzes the transfer of the enolpyruvyl moiety of phosphoenolpyruvate (PEP) to the 5-hydroxyl of shikimate-3-phosphate (S3P) to produce enolpyruvyl shikimate-3-phosphate and inorganic phosphate. The chain is 3-phosphoshikimate 1-carboxyvinyltransferase from Carboxydothermus hydrogenoformans (strain ATCC BAA-161 / DSM 6008 / Z-2901).